Here is a 427-residue protein sequence, read N- to C-terminus: Inward rectifier potassium channel 2 (427 aa).

The Cytoplasmic segment spans residues 1-81; the sequence is MGSVRTNRYS…IFTTCVDIRW (81 aa). The residue at position 76 (Cys76) is an S-nitrosocysteine. A helical membrane pass occupies residues 82–106; the sequence is RWMLVIFCLAFVLSWLFFGCVFWLI. Topologically, residues 107 to 128 are extracellular; the sequence is ALLHGDLDASRESKACVSEVNS. The helical; Pore-forming intramembrane region spans 129-140; that stretch reads FTAAFLFSIETQ. An intramembrane region (pore-forming) is located at residues 141 to 147; it reads TTIGYGF. The Selectivity filter signature appears at 142-147; sequence TIGYGF. Residues 148–156 are Extracellular-facing; it reads RCVTDECPV. The helical transmembrane segment at 157–178 threads the bilayer; sequence AVFMVVFQSIVGCIIDAFIIGA. Residues 179 to 427 lie on the Cytoplasmic side of the membrane; it reads VMAKMAKPKK…PRPLRRESEI (249 aa). Positions 181-208 are polyphosphoinositide (PIP2)-binding; that stretch reads AKMAKPKKRNETLVFSHNAVIAMRDGKL. Residues 384–427 are disordered; it reads SKEEDDSENGVPESTSTDTPPDIDLHNQASVPLEPRPLRRESEI. Positions 425-427 match the PDZ-binding motif; it reads SEI.

The protein belongs to the inward rectifier-type potassium channel (TC 1.A.2.1) family. KCNJ2 subfamily. As to quaternary structure, homotetramer. Homomultimeric and heteromultimeric association with KCNJ4/Kir2.3. Can form heteromeric channels with Kir2.6/KCNJ18. Associates, via its PDZ-recognition domain, with a complex containing LIN7A, LIN7B, LIN7C, DLG1, CASK and APBA1. In terms of processing, S-nitrosylation increases the open probability and inward rectifying currents. As to expression, highly expressed in the ventricle and skeletal muscle, moderately in cerebrum and cerebellum. Only low levels are detected in kidney or lung.

It localises to the cell membrane. The protein localises to the sarcolemma. It is found in the T-tubule. The catalysed reaction is K(+)(in) = K(+)(out). Its activity is regulated as follows. Activated by phosphatidylinositol 4,5 biphosphate (PtdIns(4,5)P2). Functionally, inward rectifier potassium channels are characterized by a greater tendency to allow potassium to flow into the cell rather than out of it. Their voltage dependence is regulated by the concentration of extracellular potassium; as external potassium is raised, the voltage range of the channel opening shifts to more positive voltages. The inward rectification is mainly due to the blockage of outward current by internal magnesium. Can be blocked by extracellular barium and cesium. Probably participates in establishing action potential waveform and excitability of neuronal and muscle tissues. In Oryctolagus cuniculus (Rabbit), this protein is Inward rectifier potassium channel 2 (KCNJ2).